Consider the following 286-residue polypeptide: Thymidylate synthase (286 aa).

Residue 140–141 (RR) participates in dUMP binding. Cysteine 161 acts as the Nucleophile in catalysis. DUMP-binding positions include 185-188 (RSND), asparagine 196, and 226-228 (HIY). (6R)-5,10-methylene-5,6,7,8-tetrahydrofolate is bound at residue aspartate 188. Alanine 285 provides a ligand contact to (6R)-5,10-methylene-5,6,7,8-tetrahydrofolate.

It belongs to the thymidylate synthase family. Bacterial-type ThyA subfamily. Homodimer.

It is found in the cytoplasm. It catalyses the reaction dUMP + (6R)-5,10-methylene-5,6,7,8-tetrahydrofolate = 7,8-dihydrofolate + dTMP. It participates in pyrimidine metabolism; dTTP biosynthesis. Functionally, catalyzes the reductive methylation of 2'-deoxyuridine-5'-monophosphate (dUMP) to 2'-deoxythymidine-5'-monophosphate (dTMP) while utilizing 5,10-methylenetetrahydrofolate (mTHF) as the methyl donor and reductant in the reaction, yielding dihydrofolate (DHF) as a by-product. This enzymatic reaction provides an intracellular de novo source of dTMP, an essential precursor for DNA biosynthesis. This Streptococcus thermophilus (strain CNRZ 1066) protein is Thymidylate synthase.